Consider the following 445-residue polypeptide: Mitochondrial-processing peptidase subunit alpha-2 (445 aa).

Residues 1–13 (MIGRFIARNYTTS) constitute a mitochondrion transit peptide.

This sequence belongs to the peptidase M16 family. As to quaternary structure, heterodimer of alpha and beta subunits, forming the mitochondrial processing protease (MPP) in which subunit alpha is involved in substrate recognition and binding and subunit beta is the catalytic subunit.

It is found in the mitochondrion matrix. Substrate recognition and binding subunit of the essential mitochondrial processing protease (MPP), which cleaves the mitochondrial sequence off newly imported precursors proteins. The chain is Mitochondrial-processing peptidase subunit alpha-2 (mppA2) from Dictyostelium discoideum (Social amoeba).